The following is a 639-amino-acid chain: Probable methyltransferase PMT18 (639 aa).

Residues 1 to 19 (MAKENSSHSLAEAKRKRLT) are Cytoplasmic-facing. Residues 20 to 42 (WILCVSGLCILSYVLGSWQTNTV) traverse the membrane as a helical; Signal-anchor for type II membrane protein segment. The tract at residues 41-86 (TVPTSSSEAYSRMGCDETSTTTRAQTTQTQTNPSSDDTSSSLSSSE) is disordered. Topologically, residues 43 to 639 (PTSSSEAYSR…VKSYWTGPSS (597 aa)) are lumenal. Over residues 58 to 85 (TSTTTRAQTTQTQTNPSSDDTSSSLSSS) the composition is skewed to low complexity. 2 N-linked (GlcNAc...) asparagine glycosylation sites follow: Asn-104 and Asn-427.

The protein belongs to the methyltransferase superfamily.

It is found in the endoplasmic reticulum membrane. The protein is Probable methyltransferase PMT18 of Arabidopsis thaliana (Mouse-ear cress).